Here is a 252-residue protein sequence, read N- to C-terminus: 5'-nucleotidase SurE (252 aa).

The a divalent metal cation site is built by Asp-8, Asp-9, Ser-40, and Asn-92.

This sequence belongs to the SurE nucleotidase family. Requires a divalent metal cation as cofactor.

It is found in the cytoplasm. It carries out the reaction a ribonucleoside 5'-phosphate + H2O = a ribonucleoside + phosphate. Functionally, nucleotidase that shows phosphatase activity on nucleoside 5'-monophosphates. In Chelativorans sp. (strain BNC1), this protein is 5'-nucleotidase SurE.